The chain runs to 649 residues: Acetyl-coenzyme A synthetase (649 aa).

Residues 189 to 192 (RGGK), Thr311, and Asn335 each bind CoA. Residues 387 to 389 (GEP), 411 to 416 (DTWWQT), Asp500, and Arg515 each bind ATP. Position 523 (Ser523) interacts with CoA. Arg526 contacts ATP. Val537, His539, and Val542 together coordinate Mg(2+). Residue Arg584 participates in CoA binding. At Lys609 the chain carries N6-acetyllysine.

It belongs to the ATP-dependent AMP-binding enzyme family. The cofactor is Mg(2+). Acetylated. Deacetylation by the SIR2-homolog deacetylase activates the enzyme.

It catalyses the reaction acetate + ATP + CoA = acetyl-CoA + AMP + diphosphate. Catalyzes the conversion of acetate into acetyl-CoA (AcCoA), an essential intermediate at the junction of anabolic and catabolic pathways. AcsA undergoes a two-step reaction. In the first half reaction, AcsA combines acetate with ATP to form acetyl-adenylate (AcAMP) intermediate. In the second half reaction, it can then transfer the acetyl group from AcAMP to the sulfhydryl group of CoA, forming the product AcCoA. This Rhizobium meliloti (strain 1021) (Ensifer meliloti) protein is Acetyl-coenzyme A synthetase.